A 616-amino-acid chain; its full sequence is Chaperone protein HscA homolog (616 aa).

The protein belongs to the heat shock protein 70 family.

Chaperone involved in the maturation of iron-sulfur cluster-containing proteins. Has a low intrinsic ATPase activity which is markedly stimulated by HscB. This is Chaperone protein HscA homolog from Aliivibrio fischeri (strain MJ11) (Vibrio fischeri).